The following is a 1375-amino-acid chain: DNA-directed RNA polymerase subunit beta (1375 aa).

This sequence belongs to the RNA polymerase beta chain family. The RNAP catalytic core consists of 2 alpha, 1 beta, 1 beta' and 1 omega subunit. When a sigma factor is associated with the core the holoenzyme is formed, which can initiate transcription.

It carries out the reaction RNA(n) + a ribonucleoside 5'-triphosphate = RNA(n+1) + diphosphate. In terms of biological role, DNA-dependent RNA polymerase catalyzes the transcription of DNA into RNA using the four ribonucleoside triphosphates as substrates. In Coxiella burnetii (strain RSA 331 / Henzerling II), this protein is DNA-directed RNA polymerase subunit beta.